We begin with the raw amino-acid sequence, 139 residues long: Gene 22 protein (139 aa).

This Mycobacterium phage L5 (Mycobacteriophage L5) protein is Gene 22 protein (22).